A 386-amino-acid polypeptide reads, in one-letter code: S-adenosylmethionine synthase (386 aa).

Histidine 14 lines the ATP pocket. Residue aspartate 16 coordinates Mg(2+). Position 42 (glutamate 42) interacts with K(+). L-methionine is bound by residues glutamate 55 and glutamine 101. The interval 101 to 111 (QSADIALGVDE) is flexible loop. Residues 166–168 (DGK), 233–234 (RF), aspartate 242, 248–249 (RK), alanine 265, and lysine 269 each bind ATP. Residue aspartate 242 coordinates L-methionine. L-methionine is bound at residue lysine 273.

Belongs to the AdoMet synthase family. In terms of assembly, homotetramer; dimer of dimers. It depends on Mg(2+) as a cofactor. Requires K(+) as cofactor.

Its subcellular location is the cytoplasm. The enzyme catalyses L-methionine + ATP + H2O = S-adenosyl-L-methionine + phosphate + diphosphate. The protein operates within amino-acid biosynthesis; S-adenosyl-L-methionine biosynthesis; S-adenosyl-L-methionine from L-methionine: step 1/1. Functionally, catalyzes the formation of S-adenosylmethionine (AdoMet) from methionine and ATP. The overall synthetic reaction is composed of two sequential steps, AdoMet formation and the subsequent tripolyphosphate hydrolysis which occurs prior to release of AdoMet from the enzyme. This Acholeplasma laidlawii (strain PG-8A) protein is S-adenosylmethionine synthase.